The chain runs to 896 residues: NEDD4-binding protein 1 (896 aa).

In terms of domain architecture, KH-like spans 59–143; it reads QEAVHSAKEY…IQQFVKLFEN (85 aa). Serine 226 bears the Phosphoserine mark. A Phosphothreonine modification is found at threonine 242. Phosphoserine is present on residues serine 258 and serine 300. Disordered stretches follow at residues 403–430 and 488–507; these read YPET…PKKT and ETDG…VNFV. The segment covering 414-430 has biased composition (polar residues); it reads VYSSTNELTTDSTPKKT. Position 562 is a phosphoserine (serine 562). The RNase NYN domain maps to 617 to 769; that stretch reads LKHIVIDGSN…LGRSGPRLEE (153 aa). Positions 801 to 821 are disordered; sequence GTQAASTSHQPPTRIQGAPSS. The span at 803-813 shows a compositional bias: polar residues; it reads QAASTSHQPPT. The interval 849–896 is coCUN; it reads RSSAETNELREALLKIFPDSEQRLKIDQILVAHPYMKDLNALSAMVLD.

Belongs to the N4BP1 family. In terms of assembly, interacts with NEDD4. Interacts with ITCH (via WW domain 2). Post-translationally, proteolytically cleaved by CASP8 downstream of TLR3 or TLR4, leading to its inactivation. Mainly cleaved at Asp-490 by CASP8. Cleaved by caspase-like protein MALT1 in T-cells following TCR-mediated activation, leading to its inactivation and subsequent viral reactivation during HIV-1 infection. Mono- and polyubiquitinated on the CoCUN region. Monoubiquitinated by NEDD4. Polyubiquitinated, leading to its degradation by the proteasome. Sumoylated with SUMO1, abrogating polyubiquitination and subsequent degradation. Desumoylated by SENP1, leading to accumulation in PML nuclear bodies. Detected in heart, lung, brain, liver, skeletal muscle, pancreas, kidney, spleen, testis and ovary.

Its subcellular location is the cytoplasm. The protein localises to the cytosol. The protein resides in the nucleus. It localises to the nucleolus. It is found in the PML body. With respect to regulation, proteolytic cleavage by CASP8 or MALT1 leads to its inactivation. Its function is as follows. Potent suppressor of cytokine production that acts as a regulator of innate immune signaling and inflammation. Acts as a key negative regulator of select cytokine and chemokine responses elicited by TRIF-independent Toll-like receptors (TLRs), thereby limiting inflammatory cytokine responses to minor insults. In response to more threatening pathogens, cleaved by CASP8 downstream of TLR3 or TLR4, leading to its inactivation, thereby allowing production of inflammatory cytokines. Acts as a restriction factor against some viruses, such as HIV-1: restricts HIV-1 replication by binding to HIV-1 mRNAs and mediating their degradation via its ribonuclease activity. Also acts as an inhibitor of the E3 ubiquitin-protein ligase ITCH: acts by interacting with the second WW domain of ITCH, leading to compete with ITCH's substrates and impairing ubiquitination of substrates. This chain is NEDD4-binding protein 1, found in Homo sapiens (Human).